The following is a 168-amino-acid chain: Protein SprT (168 aa).

A SprT-like domain is found at 20–166 (EKLQQANKYL…RHCQAILQLI (147 aa)). Zn(2+) is bound at residue His-78. Residue Glu-79 is part of the active site. Residue His-82 participates in Zn(2+) binding.

The protein belongs to the SprT family. Zn(2+) serves as cofactor.

The protein resides in the cytoplasm. This chain is Protein SprT, found in Proteus mirabilis (strain HI4320).